Here is a 118-residue protein sequence, read N- to C-terminus: Holo-[acyl-carrier-protein] synthase (118 aa).

Residues D8 and E58 each contribute to the Mg(2+) site.

Belongs to the P-Pant transferase superfamily. AcpS family. Mg(2+) serves as cofactor.

The protein localises to the cytoplasm. It carries out the reaction apo-[ACP] + CoA = holo-[ACP] + adenosine 3',5'-bisphosphate + H(+). Transfers the 4'-phosphopantetheine moiety from coenzyme A to a Ser of acyl-carrier-protein. This Streptococcus equi subsp. zooepidemicus (strain MGCS10565) protein is Holo-[acyl-carrier-protein] synthase.